The primary structure comprises 73 residues: Translation initiation factor IF-1 (73 aa).

The 72-residue stretch at 1 to 72 folds into the S1-like domain; it reads MAKEEAIEKD…SKGRIVYRYK (72 aa).

This sequence belongs to the IF-1 family. In terms of assembly, component of the 30S ribosomal translation pre-initiation complex which assembles on the 30S ribosome in the order IF-2 and IF-3, IF-1 and N-formylmethionyl-tRNA(fMet); mRNA recruitment can occur at any time during PIC assembly.

It localises to the cytoplasm. Its function is as follows. One of the essential components for the initiation of protein synthesis. Stabilizes the binding of IF-2 and IF-3 on the 30S subunit to which N-formylmethionyl-tRNA(fMet) subsequently binds. Helps modulate mRNA selection, yielding the 30S pre-initiation complex (PIC). Upon addition of the 50S ribosomal subunit IF-1, IF-2 and IF-3 are released leaving the mature 70S translation initiation complex. In Salinibacter ruber (strain DSM 13855 / M31), this protein is Translation initiation factor IF-1.